The following is a 603-amino-acid chain: UvrABC system protein C (603 aa).

In terms of domain architecture, GIY-YIG spans 14 to 92 (ELPGVYRMLD…IKSLAPRYNI (79 aa)). A UVR domain is found at 201–236 (QEVTRRLTKSMEEASAKLAFEQAAVFRDQIQSLHQV).

Belongs to the UvrC family. As to quaternary structure, interacts with UvrB in an incision complex.

The protein resides in the cytoplasm. The UvrABC repair system catalyzes the recognition and processing of DNA lesions. UvrC both incises the 5' and 3' sides of the lesion. The N-terminal half is responsible for the 3' incision and the C-terminal half is responsible for the 5' incision. The protein is UvrABC system protein C of Dechloromonas aromatica (strain RCB).